A 124-amino-acid polypeptide reads, in one-letter code: MSENPDDLELESEEKQCELKSGCVYLQDSPEKTCNPILSEEAKLKAKYPSLGHKPGGSDFLMKRLQKGQKYFDSGDYNMAKAKMKSKHVVQSAAEKSLVTGDHIPTPQDLPQRKNTILTSKLAG.

Ser74 carries the post-translational modification Phosphoserine; by GWL. The interval 99 to 124 (VTGDHIPTPQDLPQRKNTILTSKLAG) is disordered. The span at 113–124 (RKNTILTSKLAG) shows a compositional bias: polar residues.

Belongs to the endosulfine family. Phosphorylation at Ser-74 by gwl during mitosis is essential for interaction with ppp2r2d (PR55-delta) and subsequent inactivation of PP2A.

It localises to the cytoplasm. Its function is as follows. Protein phosphatase inhibitor that specifically inhibits protein phosphatase 2A (PP2A) during mitosis. When phosphorylated at Ser-67 during mitosis, specifically interacts with ppp2r2d (PR55-delta) and inhibits its activity, leading to inactivation of PP2A, an essential condition to keep cyclin-B1-CDK1 activity high during M phase. The protein is Alpha-endosulfine (ensa) of Danio rerio (Zebrafish).